Reading from the N-terminus, the 321-residue chain is Carbonic anhydrase, chloroplastic (321 aa).

A chloroplast-targeting transit peptide spans 1–100; that stretch reads MSTASINSCL…AAARVDQITA (100 aa).

This sequence belongs to the beta-class carbonic anhydrase family. As to quaternary structure, homohexamer.

Its subcellular location is the plastid. The protein localises to the chloroplast stroma. It carries out the reaction hydrogencarbonate + H(+) = CO2 + H2O. Reversible hydration of carbon dioxide. The chain is Carbonic anhydrase, chloroplastic from Nicotiana tabacum (Common tobacco).